The primary structure comprises 97 residues: DNA-directed RNA polymerase subunit omega (97 aa).

The protein belongs to the RNA polymerase subunit omega family. As to quaternary structure, the RNAP catalytic core consists of 2 alpha, 1 beta, 1 beta' and 1 omega subunit. When a sigma factor is associated with the core the holoenzyme is formed, which can initiate transcription.

The catalysed reaction is RNA(n) + a ribonucleoside 5'-triphosphate = RNA(n+1) + diphosphate. Promotes RNA polymerase assembly. Latches the N- and C-terminal regions of the beta' subunit thereby facilitating its interaction with the beta and alpha subunits. The protein is DNA-directed RNA polymerase subunit omega of Corynebacterium glutamicum (strain ATCC 13032 / DSM 20300 / JCM 1318 / BCRC 11384 / CCUG 27702 / LMG 3730 / NBRC 12168 / NCIMB 10025 / NRRL B-2784 / 534).